We begin with the raw amino-acid sequence, 75 residues long: Exodeoxyribonuclease 7 small subunit (75 aa).

This sequence belongs to the XseB family. As to quaternary structure, heterooligomer composed of large and small subunits.

The protein localises to the cytoplasm. It catalyses the reaction Exonucleolytic cleavage in either 5'- to 3'- or 3'- to 5'-direction to yield nucleoside 5'-phosphates.. Bidirectionally degrades single-stranded DNA into large acid-insoluble oligonucleotides, which are then degraded further into small acid-soluble oligonucleotides. This Chlamydia pneumoniae (Chlamydophila pneumoniae) protein is Exodeoxyribonuclease 7 small subunit.